The chain runs to 519 residues: MPSESSVSIYKLDQLEYQYHYLTKSLQKFEPRYPKTAKLYNCIGKKNKKKIEKLLNSLELKTLDKELDESYSKLLNNKIHYYETHLSKCIKEQIQKISKKNSSKVKDAQKNKSPSIDIEKMLATQLSLDDLALFMTRFRLIKILHQRIKQKSKKIEGDTNNKTWLNNNDYSGYINDKTSKWNPSNIWNEVITKLPSCEKLNALIGQSKIVQNLTESFDLSICLIFGFDVSAMKAKKYGAREKTANANQTHSNIDYDTDDGNEKNAIDSKSNAIGAQTQSNKETTSDNEDLLIKEYEGMLGSSGDEGEGGGYLNPNINYNEVTDEEPSEASSDEDDSDERFSDSEENEPRRKKPKLHNLPELMAGYYSGNDTEEESDEDNKNVKGKKKKRDTAEDRTAREQMSNEPKRKNRRGQRARRKIWEKKYGSQAKHVQRELEKEMEDRKQRQIEYEARVAKREAKAASLEASRSREREDRRTETNNKKEKESASTGEEHPSWIAKRLAEEKLQKAKFEGKKIKFD.

Positions 241–497 are disordered; sequence EKTANANQTH…STGEEHPSWI (257 aa). Polar residues predominate over residues 244-254; that stretch reads ANANQTHSNID. T257 is modified (phosphothreonine). The segment covering 267–282 has biased composition (polar residues); it reads DSKSNAIGAQTQSNKE. Positions 321 to 337 are enriched in acidic residues; sequence VTDEEPSEASSDEDDSD. The segment covering 338–348 has biased composition (basic and acidic residues); that stretch reads ERFSDSEENEP. Position 367 is a phosphoserine (S367). T371 bears the Phosphothreonine mark. Position 375 is a phosphoserine (S375). The span at 407–420 shows a compositional bias: basic residues; it reads RKNRRGQRARRKIW. The stretch at 426–470 forms a coiled coil; the sequence is SQAKHVQRELEKEMEDRKQRQIEYEARVAKREAKAASLEASRSRE. Composition is skewed to basic and acidic residues over residues 431–459 and 466–497; these read VQRELEKEMEDRKQRQIEYEARVAKREAK and SRSREREDRRTETNNKKEKESASTGEEHPSWI.

This sequence belongs to the BUD22 family.

The protein resides in the nucleus. Its function is as follows. Involved in positioning the proximal bud pole signal. In Saccharomyces cerevisiae (strain ATCC 204508 / S288c) (Baker's yeast), this protein is Bud site selection protein 22 (BUD22).